The sequence spans 285 residues: Nucleotide-binding protein Avin_12760 (285 aa).

8–15 (GRSGSGKS) serves as a coordination point for ATP. 60–63 (DARN) serves as a coordination point for GTP.

It belongs to the RapZ-like family.

Displays ATPase and GTPase activities. The protein is Nucleotide-binding protein Avin_12760 of Azotobacter vinelandii (strain DJ / ATCC BAA-1303).